A 195-amino-acid polypeptide reads, in one-letter code: PRELI domain containing protein 3B (195 aa).

In terms of domain architecture, PRELI/MSF1 spans 1–172; that stretch reads MKIWTSEHVF…VIHKLNAEIE (172 aa). Ser-46 and Ser-51 each carry phosphoserine.

The protein belongs to the slowmo family.

The sequence is that of PRELI domain containing protein 3B (Prelid3b) from Rattus norvegicus (Rat).